We begin with the raw amino-acid sequence, 336 residues long: dTDP-glucose 4,6-dehydratase (336 aa).

Residues 7–13 (GGAGFIG), 37–40 (DKLT), and 63–64 (DI) contribute to the NAD(+) site. Position 87 (T87) interacts with substrate. T102 is an NAD(+) binding site. 127–129 (TDE) is a binding site for substrate. The active-site Proton donor is the D128. Active-site proton acceptor residues include E129 and Y151. 151–155 (YAAAK) contacts NAD(+). A substrate-binding site is contributed by N180. N181 is an NAD(+) binding site. Residues 190 to 191 (KL), 206 to 208 (PVY), R215, N250, and 274 to 277 (RPGH) contribute to the substrate site.

The protein belongs to the NAD(P)-dependent epimerase/dehydratase family. dTDP-glucose dehydratase subfamily. Homodimer. NAD(+) serves as cofactor.

The catalysed reaction is dTDP-alpha-D-glucose = dTDP-4-dehydro-6-deoxy-alpha-D-glucose + H2O. It participates in antibiotic biosynthesis; novobiocin biosynthesis. In terms of biological role, dTDP-glucose 4,6-dehydratase involved in the generation of the deoxysugar in the novobiocin biosynthesis pathway, an aminocoumarin family antibiotic that targets bacterial DNA gyrases. This is dTDP-glucose 4,6-dehydratase (novT) from Streptomyces niveus (Streptomyces spheroides).